Consider the following 634-residue polypeptide: CREB-regulated transcription coactivator 1 (634 aa).

A phosphoserine mark is found at Ser64 and Ser113. 4 disordered regions span residues 110 to 174 (RLGS…GSQD), 191 to 221 (TTSE…VPGI), 258 to 331 (LPTP…TLSP), and 357 to 479 (QAGS…HTST). Phosphothreonine is present on Thr149. Residue Ser151 is modified to Phosphoserine; by SIK1 and SIK2. Over residues 151–174 (SDSALHQSTMTPTQPESFSSGSQD) the composition is skewed to polar residues. Thr161 is subject to Phosphothreonine. A compositionally biased stretch (basic and acidic residues) spans 194 to 208 (EADKNLSKQAWDTKK). The Nuclear export signal motif lies at 242–258 (TGGSLPDLTNIHFPSPL). 3 stretches are compositionally biased toward polar residues: residues 271 to 283 (ALSS…NLAA), 296 to 305 (GMSTPGSSPQ), and 314 to 331 (LSLS…TLSP). Pro residues predominate over residues 362–397 (QPPPQPQPPPPPPPASQQPPPPPPPQAPVRLPPGGP). Positions 446–479 (QYRTSAGSPANQSPTSPVSNQGFSPGSSPQHTST) are enriched in polar residues.

The protein belongs to the TORC family. Binds, as a tetramer, through its N-terminal region, with the bZIP domain of CREB1. 'Arg-314' in the bZIP domain of CREB1 is essential for this interaction. Interaction, via its C-terminal, with TAF4, enhances recruitment of TAF4 to CREB1. Interacts with 14-3-3 proteins, including YWHAE/14-3-3 epsilon. Interacts with calmodulin-dependent catalytic subunit PPP3CA/calcineurin A. In terms of assembly, (Microbial infection) Interacts with HTLV1 Tax. In terms of processing, phosphorylation/dephosphorylation states of Ser-151 are required for regulating transduction of CREB activity. TORCs are inactive when phosphorylated, and active when dephosphorylated at this site. This primary site of phosphorylation is mediated by SIKs (SIK1 and SIK2), is regulated by cAMP and calcium levels and is dependent on the phosphorylation of SIKs by LKB1. As to expression, highly expressed in adult and fetal brain. Located to specific regions such as the prefrontal cortex and cerebellum. Very low expression in other tissues such as heart, spleen, lung, skeletal muscle, salivary gland, ovary and kidney.

The protein localises to the cytoplasm. It is found in the nucleus. Functionally, transcriptional coactivator for CREB1 which activates transcription through both consensus and variant cAMP response element (CRE) sites. Acts as a coactivator, in the SIK/TORC signaling pathway, being active when dephosphorylated and acts independently of CREB1 'Ser-133' phosphorylation. Enhances the interaction of CREB1 with TAF4. Regulates the expression of specific CREB-activated genes such as the steroidogenic gene, StAR. Potent coactivator of PGC1alpha and inducer of mitochondrial biogenesis in muscle cells. In the hippocampus, involved in late-phase long-term potentiation (L-LTP) maintenance at the Schaffer collateral-CA1 synapses. May be required for dendritic growth of developing cortical neurons. In concert with SIK1, regulates the light-induced entrainment of the circadian clock. In response to light stimulus, coactivates the CREB-mediated transcription of PER1 which plays an important role in the photic entrainment of the circadian clock. (Microbial infection) Plays a role of coactivator for TAX activation of the human T-cell leukemia virus type 1 (HTLV-1) long terminal repeats (LTR). The sequence is that of CREB-regulated transcription coactivator 1 from Homo sapiens (Human).